Consider the following 742-residue polypeptide: Synaptic vesicle glycoprotein 2A (742 aa).

The segment at 1 to 57 (MEEGFRDRAAFIRGAKDIAKEVKKHAAKKVVKGLDRVQDEYSRRSYSRFEEEDDDDD) is interaction with SYT1. At 1-169 (MEEGFRDRAA…GHGRFQWTLY (169 aa)) the chain is on the cytoplasmic side. The span at 33–49 (GLDRVQDEYSRRSYSRF) shows a compositional bias: basic and acidic residues. A disordered region spans residues 33 to 144 (GLDRVQDEYS…GRGEAQRRKE (112 aa)). Serine 80 and serine 81 each carry phosphoserine. Phosphothreonine is present on threonine 84. Gly residues predominate over residues 122–137 (VRGGLSDGEGPPGGRG). A Phosphoserine modification is found at serine 127. The helical transmembrane segment at 170–190 (FVLGLALMADGVEVFVVGFVL) threads the bilayer. Topologically, residues 191–205 (PSAEKDMCLSDSNKG) are extracellular. A helical transmembrane segment spans residues 206 to 226 (MLGLIVYLGMMVGAFLWGGLA). Topologically, residues 227–233 (DRLGRRQ) are cytoplasmic. Residues 234–254 (CLLISLSVNSVFAFFSSFVQG) form a helical membrane-spanning segment. Topologically, residues 255–262 (YGTFLFCR) are extracellular. Residues 263–283 (LLSGVGIGGSIPIVFSYFSEF) traverse the membrane as a helical segment. The Cytoplasmic segment spans residues 284–294 (LAQEKRGEHLS). The helical transmembrane segment at 295-315 (WLCMFWMIGGVYAAAMAWAII) threads the bilayer. The Extracellular portion of the chain corresponds to 316–334 (PHYGWSFQMGSAYQFHSWR). Residues 335-355 (VFVLVCAFPSVFAIGALTTQP) traverse the membrane as a helical segment. Over 356–447 (ESPRFFLENG…CFGPEYRRIT (92 aa)) the chain is Cytoplasmic. A Phosphoserine modification is found at serine 393. A helical transmembrane segment spans residues 448-468 (LMMMGVWFTMSFSYYGLTVWF). The Extracellular portion of the chain corresponds to 469 to 598 (PDMIRHLQAV…GTGEGAYMVY (130 aa)). Position 480 is a phosphotyrosine (tyrosine 480). N-linked (GlcNAc...) asparagine glycosylation is found at asparagine 498, asparagine 548, and asparagine 573. The helical transmembrane segment at 599–619 (FVSFLGTLAVLPGNIVSALLM) threads the bilayer. At 620-626 (DKIGRLR) the chain is on the cytoplasmic side. Residues 627–647 (MLAGSSVMSCVSCFFLSFGNS) traverse the membrane as a helical segment. Residues 648-651 (ESAM) are Extracellular-facing. Residues 652–672 (IALLCLFGGVSIASWNALDVL) traverse the membrane as a helical segment. The Cytoplasmic portion of the chain corresponds to 673 to 690 (TVGLYPSDKRTTAFGFLN). The helical transmembrane segment at 691 to 711 (ALCKLAAVLGISIFTSFVGIT) threads the bilayer. A topological domain (extracellular) is located at residue lysine 712. A helical transmembrane segment spans residues 713-733 (AAPIPFASAALALGSSLALKL). The Cytoplasmic portion of the chain corresponds to 734–742 (PETRGQVLQ).

It belongs to the major facilitator superfamily. As to quaternary structure, interacts with SYT1/synaptotagmin-1 in a calcium-dependent manner. Binds the adapter protein complex AP-2. Phosphorylation by CK1 of the N-terminal cytoplasmic domain regulates interaction with SYT1. In terms of processing, N-glycosylated.

The protein localises to the presynapse. It localises to the cytoplasmic vesicle. The protein resides in the secretory vesicle. It is found in the synaptic vesicle membrane. Functionally, plays a role in the control of regulated secretion in neural and endocrine cells, enhancing selectively low-frequency neurotransmission. Positively regulates vesicle fusion by maintaining the readily releasable pool of secretory vesicles. This is Synaptic vesicle glycoprotein 2A (SV2A) from Macaca fascicularis (Crab-eating macaque).